Reading from the N-terminus, the 367-residue chain is Glutamate 5-kinase (367 aa).

Residue lysine 10 participates in ATP binding. The substrate site is built by serine 50, aspartate 137, and asparagine 149. ATP is bound by residues 169–170 (TD) and 211–217 (TGGMSTK). The PUA domain maps to 275–353 (AGEITVDDGA…QQIAEILGYE (79 aa)).

It belongs to the glutamate 5-kinase family.

It localises to the cytoplasm. It catalyses the reaction L-glutamate + ATP = L-glutamyl 5-phosphate + ADP. Its pathway is amino-acid biosynthesis; L-proline biosynthesis; L-glutamate 5-semialdehyde from L-glutamate: step 1/2. Functionally, catalyzes the transfer of a phosphate group to glutamate to form L-glutamate 5-phosphate. The sequence is that of Glutamate 5-kinase from Pectobacterium carotovorum subsp. carotovorum (strain PC1).